The sequence spans 107 residues: Large ribosomal subunit protein uL24 (107 aa).

This sequence belongs to the universal ribosomal protein uL24 family. Part of the 50S ribosomal subunit.

Functionally, one of two assembly initiator proteins, it binds directly to the 5'-end of the 23S rRNA, where it nucleates assembly of the 50S subunit. One of the proteins that surrounds the polypeptide exit tunnel on the outside of the subunit. The polypeptide is Large ribosomal subunit protein uL24 (Coxiella burnetii (strain Dugway 5J108-111)).